A 157-amino-acid polypeptide reads, in one-letter code: 2-C-methyl-D-erythritol 2,4-cyclodiphosphate synthase (157 aa).

The a divalent metal cation site is built by Asp-8 and His-10. Residues 8 to 10 (DVH) and 34 to 35 (HS) each bind 4-CDP-2-C-methyl-D-erythritol 2-phosphate. His-42 serves as a coordination point for a divalent metal cation. Residues 56 to 58 (DIG), 132 to 135 (TTNE), and Arg-142 contribute to the 4-CDP-2-C-methyl-D-erythritol 2-phosphate site.

Belongs to the IspF family. In terms of assembly, homotrimer. The cofactor is a divalent metal cation.

It catalyses the reaction 4-CDP-2-C-methyl-D-erythritol 2-phosphate = 2-C-methyl-D-erythritol 2,4-cyclic diphosphate + CMP. It functions in the pathway isoprenoid biosynthesis; isopentenyl diphosphate biosynthesis via DXP pathway; isopentenyl diphosphate from 1-deoxy-D-xylulose 5-phosphate: step 4/6. Its function is as follows. Involved in the biosynthesis of isopentenyl diphosphate (IPP) and dimethylallyl diphosphate (DMAPP), two major building blocks of isoprenoid compounds. Catalyzes the conversion of 4-diphosphocytidyl-2-C-methyl-D-erythritol 2-phosphate (CDP-ME2P) to 2-C-methyl-D-erythritol 2,4-cyclodiphosphate (ME-CPP) with a corresponding release of cytidine 5-monophosphate (CMP). The polypeptide is 2-C-methyl-D-erythritol 2,4-cyclodiphosphate synthase (Chlorobium phaeovibrioides (strain DSM 265 / 1930) (Prosthecochloris vibrioformis (strain DSM 265))).